The primary structure comprises 239 residues: RNA polymerase sigma factor FliA (239 aa).

Residues 16–88 form a sigma-70 factor domain-2 region; sequence LWQRYVPLVR…MLDELRSRDW (73 aa). The Interaction with polymerase core subunit RpoC motif lies at 43-46; it reads DLLQ. The interval 96-166 is sigma-70 factor domain-3; sequence NAREVAQAMG…IELVTEEHQQ (71 aa). The sigma-70 factor domain-4 stretch occupies residues 185–233; sequence AIESLPEREQLVLTLYYQEELNLKEIGAVLEVGESRVSQLHSQAIKRLR. Residues 207 to 226 constitute a DNA-binding region (H-T-H motif); the sequence is LKEIGAVLEVGESRVSQLHS.

The protein belongs to the sigma-70 factor family. FliA subfamily.

The protein resides in the cytoplasm. Functionally, sigma factors are initiation factors that promote the attachment of RNA polymerase to specific initiation sites and are then released. This sigma factor controls the expression of flagella-related genes. In Salmonella typhi, this protein is RNA polymerase sigma factor FliA.